An 829-amino-acid chain; its full sequence is Protein kintoun (829 aa).

4 disordered regions span residues 197–255 (VLRT…APTE), 349–377 (LPVA…DGAA), 400–465 (PSRT…SWGD), and 478–505 (RPTL…GGPG). Residues 352–371 (APTASRPEPAASPEEAADPP) are compositionally biased toward low complexity. The span at 416 to 430 (PGKERVAKSEERDFG) shows a compositional bias: basic and acidic residues. Serine 450 is modified (phosphoserine). Residues 484–497 (EARETREGTGREPA) show a composition bias toward basic and acidic residues. Phosphoserine is present on serine 632. Residues 667 to 698 (NSEQLHEKEERVHEGSPLTEKENTEHATISTT) are disordered. The span at 670-691 (QLHEKEERVHEGSPLTEKENTE) shows a compositional bias: basic and acidic residues.

Belongs to the PIH1 family. Kintoun subfamily. Interacts with CFAP300. Interacts with DNAI2 and HSPA1A. Interacts with DNAAF4. Interacts with DNAAF6/PIH1D3.

The protein resides in the cytoplasm. The protein localises to the dynein axonemal particle. Its function is as follows. Required for cytoplasmic pre-assembly of axonemal dyneins, thereby playing a central role in motility in cilia and flagella. Involved in pre-assembly of dynein arm complexes in the cytoplasm before intraflagellar transport loads them for the ciliary compartment. The chain is Protein kintoun from Bos taurus (Bovine).